A 287-amino-acid chain; its full sequence is Probable glucose uptake protein GlcU (287 aa).

9 helical membrane passes run L7–G29, I34–F56, N58–G75, W114–L136, M156–V178, A183–H202, T209–Y228, V233–F255, and T267–L286.

The protein belongs to the GRP transporter (TC 2.A.7.5) family.

Its subcellular location is the cell membrane. In terms of biological role, involved in the uptake of glucose. The chain is Probable glucose uptake protein GlcU (glcU) from Staphylococcus aureus (strain COL).